Reading from the N-terminus, the 273-residue chain is Large ribosomal subunit protein uL2 (273 aa).

Residues 228–273 (VDHPHGGGEGKTSGGRHPVTPWGFPTKGKKTRKNKRTSKFIVKKRK) are disordered. Over residues 254–273 (KGKKTRKNKRTSKFIVKKRK) the composition is skewed to basic residues.

Belongs to the universal ribosomal protein uL2 family. As to quaternary structure, part of the 50S ribosomal subunit. Forms a bridge to the 30S subunit in the 70S ribosome.

Its function is as follows. One of the primary rRNA binding proteins. Required for association of the 30S and 50S subunits to form the 70S ribosome, for tRNA binding and peptide bond formation. It has been suggested to have peptidyltransferase activity; this is somewhat controversial. Makes several contacts with the 16S rRNA in the 70S ribosome. The sequence is that of Large ribosomal subunit protein uL2 from Rickettsia africae (strain ESF-5).